A 602-amino-acid chain; its full sequence is Elongation factor 4 (602 aa).

Residues 2–184 (NHIRNFSIIA…AVVAKVPPPK (183 aa)) enclose the tr-type G domain. GTP contacts are provided by residues 14 to 19 (DHGKST) and 131 to 134 (NKMD).

Belongs to the TRAFAC class translation factor GTPase superfamily. Classic translation factor GTPase family. LepA subfamily.

It localises to the cell inner membrane. It catalyses the reaction GTP + H2O = GDP + phosphate + H(+). In terms of biological role, required for accurate and efficient protein synthesis under certain stress conditions. May act as a fidelity factor of the translation reaction, by catalyzing a one-codon backward translocation of tRNAs on improperly translocated ribosomes. Back-translocation proceeds from a post-translocation (POST) complex to a pre-translocation (PRE) complex, thus giving elongation factor G a second chance to translocate the tRNAs correctly. Binds to ribosomes in a GTP-dependent manner. The protein is Elongation factor 4 of Delftia acidovorans (strain DSM 14801 / SPH-1).